We begin with the raw amino-acid sequence, 308 residues long: Aspartate carbamoyltransferase catalytic subunit (308 aa).

Arg-57 and Thr-58 together coordinate carbamoyl phosphate. Residue Lys-86 coordinates L-aspartate. Carbamoyl phosphate contacts are provided by Arg-107, His-135, and Gln-138. Residues Arg-168 and Arg-229 each coordinate L-aspartate. Carbamoyl phosphate-binding residues include Leu-268 and Pro-269.

It belongs to the aspartate/ornithine carbamoyltransferase superfamily. ATCase family. As to quaternary structure, heterooligomer of catalytic and regulatory chains.

It carries out the reaction carbamoyl phosphate + L-aspartate = N-carbamoyl-L-aspartate + phosphate + H(+). Its pathway is pyrimidine metabolism; UMP biosynthesis via de novo pathway; (S)-dihydroorotate from bicarbonate: step 2/3. Catalyzes the condensation of carbamoyl phosphate and aspartate to form carbamoyl aspartate and inorganic phosphate, the committed step in the de novo pyrimidine nucleotide biosynthesis pathway. This Pyrococcus horikoshii (strain ATCC 700860 / DSM 12428 / JCM 9974 / NBRC 100139 / OT-3) protein is Aspartate carbamoyltransferase catalytic subunit.